The sequence spans 574 residues: Proline--tRNA ligase (574 aa).

This sequence belongs to the class-II aminoacyl-tRNA synthetase family. ProS type 1 subfamily. In terms of assembly, homodimer.

It is found in the cytoplasm. The enzyme catalyses tRNA(Pro) + L-proline + ATP = L-prolyl-tRNA(Pro) + AMP + diphosphate. In terms of biological role, catalyzes the attachment of proline to tRNA(Pro) in a two-step reaction: proline is first activated by ATP to form Pro-AMP and then transferred to the acceptor end of tRNA(Pro). As ProRS can inadvertently accommodate and process non-cognate amino acids such as alanine and cysteine, to avoid such errors it has two additional distinct editing activities against alanine. One activity is designated as 'pretransfer' editing and involves the tRNA(Pro)-independent hydrolysis of activated Ala-AMP. The other activity is designated 'posttransfer' editing and involves deacylation of mischarged Ala-tRNA(Pro). The misacylated Cys-tRNA(Pro) is not edited by ProRS. The chain is Proline--tRNA ligase from Ralstonia pickettii (strain 12J).